The sequence spans 224 residues: UPF0758 protein BPUM_2444 (224 aa).

Positions 102 to 224 constitute an MPN domain; sequence VIRTPEDGAN…FVSLKEKGYL (123 aa). H173, H175, and D186 together coordinate Zn(2+). The JAMM motif signature appears at 173–186; it reads HNHPSGDPTPSRED.

Belongs to the UPF0758 family.

This Bacillus pumilus (strain SAFR-032) protein is UPF0758 protein BPUM_2444.